The following is a 222-amino-acid chain: Interleukin-12 subunit alpha (222 aa).

Positions 1-25 are cleaved as a signal peptide; it reads MCPLRNLLLVATLVLLNHLDHLSLG. 3 disulfide bridges follow: Cys40/Cys113, Cys67/Cys199, and Cys88/Cys126. Asn42 and Asn96 each carry an N-linked (GlcNAc...) asparagine glycan.

Belongs to the IL-6 superfamily. In terms of assembly, heterodimer with IL12B; disulfide-linked. This heterodimer is known as interleukin IL-12. Heterodimer with EBI3/IL27B; not disulfide-linked. This heterodimer is known as interleukin IL-35. Interacts with NBR1; this interaction promotes IL-12 secretion.

It is found in the secreted. Heterodimerizes with IL12B to form the IL-12 cytokine or with EBI3/IL27B to form the IL-35 cytokine. IL-12 is primarily produced by professional antigen-presenting cells (APCs) such as B-cells and dendritic cells (DCs) as well as macrophages and granulocytes and regulates T-cell and natural killer-cell responses, induces the production of interferon-gamma (IFN-gamma), favors the differentiation of T-helper 1 (Th1) cells and is an important link between innate resistance and adaptive immunity. Mechanistically, exerts its biological effects through a receptor composed of IL12R1 and IL12R2 subunits. Binding to the receptor results in the rapid tyrosine phosphorylation of a number of cellular substrates including the JAK family kinases TYK2 and JAK2. In turn, recruited STAT4 gets phosphorylated and translocates to the nucleus where it regulates cytokine/growth factor responsive genes. As part of IL-35, plays essential roles in maintaining the immune homeostasis of the liver microenvironment and also functions as an immune-suppressive cytokine. Mediates biological events through unconventional receptors composed of IL12RB2 and gp130/IL6ST heterodimers or homodimers. Signaling requires the transcription factors STAT1 and STAT4, which form a unique heterodimer that binds to distinct DNA sites. The polypeptide is Interleukin-12 subunit alpha (IL12A) (Sus scrofa (Pig)).